Here is a 349-residue protein sequence, read N- to C-terminus: Cdc42 effector protein 4 (349 aa).

K5 bears the N6-methyllysine mark. Phosphoserine is present on S18. A CRIB domain is found at 27–41; that stretch reads ISAPLGDFRHTMHVG. Residues S64, S103, S107, and S116 each carry the phosphoserine modification. Residues 123–132 are compositionally biased toward basic and acidic residues; that stretch reads KEAAEKDSSK. 3 disordered regions span residues 123–172, 220–240, and 278–349; these read KEAA…LLDE, QWGS…GPSS, and GWAV…EIRV. A phosphoserine mark is found at S136, S138, S140, S154, S165, S223, S285, and S288. Low complexity predominate over residues 280-308; it reads AVVAPSPSSARSVGSHTTRDSSSLSSYTS. The span at 311 to 322 shows a compositional bias: basic and acidic residues; the sequence is LEERSPAFRGPD. A compositionally biased stretch (acidic residues) spans 338 to 349; the sequence is FMDEEEEDEIRV.

The protein belongs to the BORG/CEP family. Interacts with CDC42 and RHOQ, in a GTP-dependent manner. In terms of tissue distribution, ubiquitous.

The protein localises to the endomembrane system. It is found in the cytoplasm. Its subcellular location is the cytoskeleton. Functionally, probably involved in the organization of the actin cytoskeleton. May act downstream of CDC42 to induce actin filament assembly leading to cell shape changes. Induces pseudopodia formation, when overexpressed in fibroblasts. This chain is Cdc42 effector protein 4 (Cdc42ep4), found in Mus musculus (Mouse).